The following is a 1054-amino-acid chain: DIS3-like exonuclease 1 (1054 aa).

Residues 236–309 (AGIKSGRYIQ…PKNEWKGRTV (74 aa)) form the CSD1 domain. The CSD2 domain maps to 365-431 (ILVTPWDYRI…GEIATILVEN (67 aa)). The RNB domain occupies 465–816 (RKDLRKSHLV…VHRLLMAAIS (352 aa)). Ser989 is subject to Phosphoserine.

The protein belongs to the RNR ribonuclease family. Component of the RNA exosome complex. The catalytically inactive RNA exosome core (Exo-9) complex is believed to associate with catalytic subunits EXOSC10, and DIS3 or DIS3L in cytoplasmic- and nuclear-specific RNA exosome complex forms. Mg(2+) serves as cofactor.

Its subcellular location is the cytoplasm. It catalyses the reaction Exonucleolytic cleavage in the 3'- to 5'-direction to yield nucleoside 5'-phosphates.. Functionally, catalytic component of the RNA exosome complex which has 3'-&gt;5' exoribonuclease activity and participates in a multitude of cellular RNA processing and degradation events. In the cytoplasm, the RNA exosome complex is involved in general mRNA turnover and specifically degrades inherently unstable mRNAs containing AU-rich elements (AREs) within their 3' untranslated regions, and in RNA surveillance pathways, preventing translation of aberrant mRNAs. It seems to be involved in degradation of histone mRNA. This chain is DIS3-like exonuclease 1 (DIS3L), found in Homo sapiens (Human).